Here is a 163-residue protein sequence, read N- to C-terminus: 16S rRNA aminocarboxypropyltransferase (163 aa).

S-adenosyl-L-methionine-binding residues include T18, I66, L87, and S106.

It belongs to the TDD superfamily. TSR3 family.

The protein localises to the cytoplasm. It carries out the reaction an N(1)-methylpseudouridine in rRNA + S-adenosyl-L-methionine = N(1)-methyl-N(3)-[(3S)-3-amino-3-carboxypropyl]pseudouridine in rRNA + S-methyl-5'-thioadenosine + H(+). Its function is as follows. Aminocarboxypropyltransferase that catalyzes the aminocarboxypropyl transfer on pseudouridine corresponding to position 914 in M.jannaschii 16S rRNA. It constitutes the last step in biosynthesis of the hypermodified N1-methyl-N3-(3-amino-3-carboxypropyl) pseudouridine (m1acp3-Psi). The chain is 16S rRNA aminocarboxypropyltransferase from Thermoplasma acidophilum (strain ATCC 25905 / DSM 1728 / JCM 9062 / NBRC 15155 / AMRC-C165).